Here is a 131-residue protein sequence, read N- to C-terminus: Small ribosomal subunit protein uS8 (131 aa).

This sequence belongs to the universal ribosomal protein uS8 family. Part of the 30S ribosomal subunit. Contacts proteins S5 and S12.

In terms of biological role, one of the primary rRNA binding proteins, it binds directly to 16S rRNA central domain where it helps coordinate assembly of the platform of the 30S subunit. This is Small ribosomal subunit protein uS8 from Halorhodospira halophila (strain DSM 244 / SL1) (Ectothiorhodospira halophila (strain DSM 244 / SL1)).